The chain runs to 268 residues: Undecaprenyl-diphosphatase 1 (268 aa).

A run of 7 helical transmembrane segments spans residues 5 to 25 (TIVEALLLGLLEGLTEFIPVS), 43 to 63 (GKAFEILIQLGAILAILSVYF), 81 to 101 (HFVIGILIAFLPAAIIGALAH), 107 to 127 (VLFESPRLICTMLIIGGVILL), 185 to 205 (AEFSFFLAIPTMVGAFAFDLF), 214 to 234 (ADLPIIAIGFVAAFVTALFVV), and 248 to 268 (LFGWWRLVVGIVGLVALMIWG).

Belongs to the UppP family.

Its subcellular location is the cell inner membrane. The catalysed reaction is di-trans,octa-cis-undecaprenyl diphosphate + H2O = di-trans,octa-cis-undecaprenyl phosphate + phosphate + H(+). Functionally, catalyzes the dephosphorylation of undecaprenyl diphosphate (UPP). Confers resistance to bacitracin. This chain is Undecaprenyl-diphosphatase 1, found in Mesorhizobium japonicum (strain LMG 29417 / CECT 9101 / MAFF 303099) (Mesorhizobium loti (strain MAFF 303099)).